We begin with the raw amino-acid sequence, 491 residues long: MAAAEPAWEAVIGLETHVQLGTDSKIFTAASTAFGDDPNTHIDPVVCGLPGTLPVLNQKVLEYAVKAAMALNLNIAEHSKFDRKQYFYPDLPKNYQISQYDEPIAEEGWIEVEVAEKGKDTYLKKIGIERLHMEEDAGKLVHAGSDRLAGSTHSLVDYNRAGVALAEIVSKPDLRTGREAAEYASEIRRIMRYLGVSDGNMQEGSLRCDVNISVRRGPDAPFGTKVEIKNMNSFSAIQKACEYEIKRQIKAYETGEPIVQETRLWDEGKQLTKSMRSKEGASDYRYFPDPDLGPIEVSVDQREAWRSELPELPAVKRHRYADDLGLSQYDARVLTDERPMADYFEAVVAAGADAKLSANWITGDIAAHVNSNRLSYAELPFRPEQLAEMVQLIDGGKISGKIAKEILPELLEKGGSPKAIVDERGLGMISDPAALQAIVDELLAAHPDEVKAFRGGKNKLQGFFVGQLMKKTGGKADPKLANQILSKKLKG.

This sequence belongs to the GatB/GatE family. GatB subfamily. As to quaternary structure, heterotrimer of A, B and C subunits.

The enzyme catalyses L-glutamyl-tRNA(Gln) + L-glutamine + ATP + H2O = L-glutaminyl-tRNA(Gln) + L-glutamate + ADP + phosphate + H(+). It carries out the reaction L-aspartyl-tRNA(Asn) + L-glutamine + ATP + H2O = L-asparaginyl-tRNA(Asn) + L-glutamate + ADP + phosphate + 2 H(+). Its function is as follows. Allows the formation of correctly charged Asn-tRNA(Asn) or Gln-tRNA(Gln) through the transamidation of misacylated Asp-tRNA(Asn) or Glu-tRNA(Gln) in organisms which lack either or both of asparaginyl-tRNA or glutaminyl-tRNA synthetases. The reaction takes place in the presence of glutamine and ATP through an activated phospho-Asp-tRNA(Asn) or phospho-Glu-tRNA(Gln). The chain is Aspartyl/glutamyl-tRNA(Asn/Gln) amidotransferase subunit B from Parasynechococcus marenigrum (strain WH8102).